Reading from the N-terminus, the 365-residue chain is Potassium channel subfamily K member 9 (365 aa).

The Cytoplasmic segment spans residues 1–8 (MKKQNVRT). The helical transmembrane segment at 9–29 (LSLIACTFTYLLVGAAVFDAL) threads the bilayer. The Extracellular portion of the chain corresponds to 30–88 (ESDHEMREEEKLKAEEIRIRGKYNISTEDYRQLELVILQSEPHRAGVQWKFAGSFYFAI). The N-linked (GlcNAc...) asparagine glycan is linked to N53. The pore-forming intramembrane region spans 89–101 (TVITTIGYGHAAP). The K(+) site is built by T93, I94, G95, and Y96. The interval 93–98 (TIGYGH) is selectivity filter 1. The Extracellular portion of the chain corresponds to 102 to 107 (GTDAGK). The chain crosses the membrane as a helical span at residues 108–128 (AFCMFYAVLGIPLTLVMFQSL). The Cytoplasmic segment spans residues 129 to 158 (GERMNTFVRYLLKRIKKCCGMRNTEVSMEN). A helical membrane pass occupies residues 159 to 179 (MVTVGFFSCMGTLCIGAAAFS). At 180-194 (QCEEWSFFHAYYYCF) the chain is on the extracellular side. The pore-forming intramembrane region spans 195–207 (ITLTTIGFGDYVA). Residues T199, I200, G201, and F202 each coordinate K(+). The tract at residues 199–204 (TIGFGD) is selectivity filter 2. The Extracellular portion of the chain corresponds to 208 to 218 (LQSKGALQRKP). A helical transmembrane segment spans residues 219–239 (FYVAFSFMYILVGLTVIGAFL). Residues 240-365 (NLVVLRFLTM…HRLMLRRKSV (126 aa)) lie on the Cytoplasmic side of the membrane. An X-gate region spans residues 243-248 (VLRFLT).

This sequence belongs to the two pore domain potassium channel (TC 1.A.1.8) family. In terms of assembly, homodimer. Heterodimer with KCNK1. Heterodimer with KCNK3. Highly expressed in the brain.

The protein resides in the cell membrane. The protein localises to the mitochondrion inner membrane. Its subcellular location is the cell projection. It localises to the dendrite. The enzyme catalyses K(+)(in) = K(+)(out). It carries out the reaction Na(+)(in) = Na(+)(out). Its activity is regulated as follows. Inhibited by extracellular acidification. In terms of biological role, k(+) channel that conducts voltage-dependent outward rectifying currents upon membrane depolarization. Voltage sensing is coupled to K(+) electrochemical gradient in an 'ion flux gating' mode where outward but not inward ion flow opens the gate. Changes ion selectivity and becomes permeable to Na(+) ions in response to extracellular acidification. Protonation of the pH sensor His-98 stabilizes C-type inactivation conformation likely converting the channel from outward K(+)-conducting, to inward Na(+)-conducting to nonconductive state. Homo- and heterodimerizes to form functional channels with distinct regulatory and gating properties. Allows K(+) currents with fast-gating kinetics important for the repolarization and hyperpolarization phases of action potentials. In granule neurons, hyperpolarizes the resting membrane potential to limit intrinsic neuronal excitability, but once the action potential threshold is reached, supports high-frequency action potential firing and increased neuronal excitability. Homomeric and/or heteromeric KCNK3:KCNK9 channels operate in cerebellar granule cells, whereas heteromeric KCNK1:KCNK9 enables currents in hippocampal dentate gyrus granule neurons. Dispensable for central chemosensory respiration i.e. breathing controlled by brainstem CO2/pH, it rather conducts pH-sensitive currents and controls the firing rate of serotonergic raphe neurons involved in potentiation of the respiratory chemoreflex. In retinal ganglion cells, mediates outward rectifying currents that regulate action potentials in response to acidification of the synaptic cleft. Involved in transmission of image-forming and nonimage-forming visual information in the retina. In adrenal gland, contributes to the maintenance of a hyperpolarized resting membrane potential of aldosterone-producing cells at zona glomerulosa and limits aldosterone release as part of a regulatory mechanism that controls arterial blood pressure and electrolyte homeostasis. This chain is Potassium channel subfamily K member 9 (KCNK9), found in Cavia porcellus (Guinea pig).